Here is a 351-residue protein sequence, read N- to C-terminus: Phosphoribosylformylglycinamidine cyclo-ligase (351 aa).

The protein belongs to the AIR synthase family.

The protein resides in the cytoplasm. It carries out the reaction 2-formamido-N(1)-(5-O-phospho-beta-D-ribosyl)acetamidine + ATP = 5-amino-1-(5-phospho-beta-D-ribosyl)imidazole + ADP + phosphate + H(+). The protein operates within purine metabolism; IMP biosynthesis via de novo pathway; 5-amino-1-(5-phospho-D-ribosyl)imidazole from N(2)-formyl-N(1)-(5-phospho-D-ribosyl)glycinamide: step 2/2. The protein is Phosphoribosylformylglycinamidine cyclo-ligase of Burkholderia lata (strain ATCC 17760 / DSM 23089 / LMG 22485 / NCIMB 9086 / R18194 / 383).